A 449-amino-acid chain; its full sequence is Trigger factor (449 aa).

In terms of domain architecture, PPIase FKBP-type spans 162–247 (GDTVTIDYTG…IHEVKSKELP (86 aa)). Residues 427 to 438 (AKKATKKSTAKK) are compositionally biased toward basic residues. The disordered stretch occupies residues 427 to 449 (AKKATKKSTAKKSTKEDEKKADK). Residues 439–449 (STKEDEKKADK) are compositionally biased toward basic and acidic residues.

This sequence belongs to the FKBP-type PPIase family. Tig subfamily.

It localises to the cytoplasm. It catalyses the reaction [protein]-peptidylproline (omega=180) = [protein]-peptidylproline (omega=0). Functionally, involved in protein export. Acts as a chaperone by maintaining the newly synthesized protein in an open conformation. Functions as a peptidyl-prolyl cis-trans isomerase. The polypeptide is Trigger factor (Lactobacillus gasseri (strain ATCC 33323 / DSM 20243 / BCRC 14619 / CIP 102991 / JCM 1131 / KCTC 3163 / NCIMB 11718 / NCTC 13722 / AM63)).